The sequence spans 174 residues: uncharacterized protein (174 aa).

Transmembrane regions (helical) follow at residues Phe-8–Phe-28 and Ile-146–Ile-166.

It localises to the cell membrane. This is an uncharacterized protein from Haemophilus influenzae (strain ATCC 51907 / DSM 11121 / KW20 / Rd).